The sequence spans 411 residues: Peptidase T (411 aa).

A Zn(2+)-binding site is contributed by His79. Asp81 is an active-site residue. A Zn(2+)-binding site is contributed by Asp142. Glu176 (proton acceptor) is an active-site residue. Zn(2+) contacts are provided by Glu177, Asp199, and His381.

The protein belongs to the peptidase M20B family. The cofactor is Zn(2+).

Its subcellular location is the cytoplasm. It catalyses the reaction Release of the N-terminal residue from a tripeptide.. In terms of biological role, cleaves the N-terminal amino acid of tripeptides. In Geobacillus thermodenitrificans (strain NG80-2), this protein is Peptidase T.